The primary structure comprises 1405 residues: MAARSPPSPHPSPPARQLGPRSPRVGRGAEVHAMRSEASGFAGAAREVVADESDKIWVGEEGSGGRRGPGGAAPAHAPLLSAPMGSRRLEGISVEEAMVTRTQLLEEELSSLKEELALCQADKEFVWSLWKRLQVTNPDLTQVVSLVVEREKQKSEAKDRKVLEILQVKDAKIQEFEQRESVLKQEINDLVKRKIAVDEENAFLRKEFSDLEKKFKDKSQEIKDTKECVQNKEEQNRLVIKNLEEENKKLSTRCTDLLNDLEKLRKQEAHLRKEKYSTDAKIKTFEDNLIEARKEVEVSQSKYNALSLQLSNKQTELIQKDMDITLVRKELQELQNLYKQNSTHTAQQAELIQQLQVLNMDTQKVLRNQEDVHTAESISYQKLYNELHICFETTKSNEAMLRQSVTNLQDQLLQKEQENAKLKEKLQESQGAPLPLPQESDPDYSAQVPHRPSLSSLETLMVSQKSEIEYLQEKLKIANEKLSENISANKGFSRKSIMTSAEGKHKEPPVKRSRSLSPKSSFTDSEELQKLRKAERKIENLEKALQLKSQENDELRDAHEKRKERLQMLQTNYRAVKEQLKQWEEGSGMTEIRKIKRADPQQLRQEDSDAVWNELAYFKRENQELMIQKMNLEEELDELKVHISIDKAAIQELNRCVAERREEQLFRSGEDDEVKRSTPEKNGKEMLEQTLQKVTELENRLKSFEKRSRKLKEGNKKLMKENDFLKSLLKQQQEDTETREKELEQIIKGSKDVEKENTELQVKISELETEVTSLRRQVAEANALRNENEELINPMEKSHQSADRAKSEMATMKVRSGRYDCKTTMTKVKFKAAKKNCSVGRHHTVLNHSIKVMSNVFENLSKDGWEDVSESSSDSEAQTSQTLGTIIVETSQKISPTEDGKDQKESDPTEDSQTQGKEIVQTYLNIDGKTPKDYFHDKNAKKPTFQKKNCKMQKSSHTAVPTRVNREKYKNITAQKSSSNIILLRERIISLQQQNSVLQNAKKTAELSVKEYKEVNEKLLHQQQVSDQRFQTSRQTIKKLNLDLAGLRKEKEDLLKKLESSSEITSLAEENSQVTFPRIQVTSLSPSRSMDLEMKQLQYKLKNATNELTKQSSNVKTLKFELLAKEEHIKEMHEKISRMERDITMKRHLIEDLKFRQKVNLESNKSFSEMLQNLDKKVKTLTEECSNKKVSIDSLKQRLNVAVKEKSQYEQMYQKSKEELEKKDLKLTLLVSRISETESAMAEIETAASKQLQELALQSEQVLEGAQKTLLLANEKVEEFTTFVKALAKELQNDVHVVRRQIRELKKMKKNRDACKTSTHKAQTLAASILNISRSDLEEILDTEDQVEIEKTKIDAENDKEWMLYIQKLLEGQSLTLSPRLKCNGAIVAHQNLRLPDSSSSASAS.

Residues 1–14 are compositionally biased toward pro residues; that stretch reads MAARSPPSPHPSPP. Positions 1–79 are disordered; that stretch reads MAARSPPSPH…GGAAPAHAPL (79 aa). Position 2 is an N-acetylalanine (A2). Residues S5 and S22 each carry the phosphoserine modification. The span at 48-58 shows a compositional bias: basic and acidic residues; it reads VVADESDKIWV. The segment covering 61–71 has biased composition (gly residues); the sequence is EGSGGRRGPGG. Residues 95–126 are a coiled coil; that stretch reads EEAMVTRTQLLEEELSSLKEELALCQADKEFV. 2 disordered regions span residues 421–450 and 493–529; these read KLKEKLQESQGAPLPLPQESDPDYSAQVPH and SRKSIMTSAEGKHKEPPVKRSRSLSPKSSFTDSEELQ. 2 coiled-coil regions span residues 613–655 and 681–793; these read NELA…ELNR and KNGK…ELIN. The tract at residues 865–917 is disordered; that stretch reads WEDVSESSSDSEAQTSQTLGTIIVETSQKISPTEDGKDQKESDPTEDSQTQGK. Positions 877 to 895 are enriched in polar residues; sequence AQTSQTLGTIIVETSQKIS. Positions 896-907 are enriched in basic and acidic residues; sequence PTEDGKDQKESD. The stretch at 980 to 1311 forms a coiled coil; the sequence is NIILLRERII…IRELKKMKKN (332 aa). Position 1343 is a phosphothreonine (T1343).

Interacts with CEP250 and CEP68. Interacts with NEK2; the interaction leads to phosphorylation of CNTLN. Post-translationally, phosphorylated directly or indirectly by NEK2.

It localises to the cytoplasm. The protein resides in the cytoskeleton. The protein localises to the microtubule organizing center. Its subcellular location is the centrosome. It is found in the centriole. Its function is as follows. Required for centrosome cohesion and recruitment of CEP68 to centrosomes. This Homo sapiens (Human) protein is Centlein (CNTLN).